A 235-amino-acid chain; its full sequence is uncharacterized protein (235 aa).

The ABC transporter domain maps to 2–235 (IKLKNVTKTY…EEKLRGFDDR (234 aa)). 38 to 45 (GPSGSGKS) serves as a coordination point for ATP.

It belongs to the ABC transporter superfamily.

This is an uncharacterized protein from Methanocaldococcus jannaschii (strain ATCC 43067 / DSM 2661 / JAL-1 / JCM 10045 / NBRC 100440) (Methanococcus jannaschii).